The chain runs to 328 residues: Reticulocalbin-3 (328 aa).

Positions 1-20 (MMWRWSFLLLLLLLRHWALG) are cleaved as a signal peptide. The interval 24–48 (PDAGPHGQDRVHHGTPLSEAPHDDA) is disordered. EF-hand domains are found at residues 77-112 (QARLGRIVDRMDLAGDSDGWVSLAELRAWIAHTQQR), 113-148 (HIRDSVSAAWHTYDTDRDGRVGWEELRNATYGHYEP), 163-198 (KMLARDERRFRVADQDGDSMATREELTAFLHPEEFP), 200-235 (MRDIVVAETLEDLDKNKDGYVQVEEYIADLYSEEPG), 241-276 (WVQTERQQFREFRDLNKDGRLDGSEVGYWVLPPSQD), and 277-312 (QPLVEANHLLHESDTDKDGRLSKAEILSNWNMFVGS). Residues aspartate 92, aspartate 94, tryptophan 96, glutamate 101, aspartate 126, aspartate 128, aspartate 130, arginine 132, and glutamate 137 each contribute to the Ca(2+) site. Residue asparagine 140 is glycosylated (N-linked (GlcNAc...) asparagine). 20 residues coordinate Ca(2+): aspartate 176, aspartate 178, aspartate 180, methionine 182, glutamate 187, aspartate 213, asparagine 215, aspartate 217, tyrosine 219, glutamate 224, aspartate 254, asparagine 256, aspartate 258, arginine 260, glutamate 265, aspartate 290, aspartate 292, aspartate 294, arginine 296, and glutamate 301. The short motif at 325–328 (HDEL) is the Prevents secretion from ER element.

Belongs to the CREC family. As to quaternary structure, interacts with PCSK6 (immature form including the propeptide); probably involved in the maturation and the secretion of PCSK6. In terms of processing, degraded by PCSK6 and other endoproteases including FURIN and PCSK5. N-glycosylated. Highly expressed in lung and heart. Also detected in liver, spleen, kidney, skeletal muscle, intestine, stomach, and brain.

The protein resides in the endoplasmic reticulum lumen. In terms of biological role, probable molecular chaperone assisting protein biosynthesis and transport in the endoplasmic reticulum. Required for the proper biosynthesis and transport of pulmonary surfactant-associated protein A/SP-A, pulmonary surfactant-associated protein D/SP-D and the lipid transporter ABCA3. By regulating both the proper expression and the degradation through the endoplasmic reticulum-associated protein degradation pathway of these proteins plays a crucial role in pulmonary surfactant homeostasis. Has an anti-fibrotic activity by negatively regulating the secretion of type I and type III collagens. This calcium-binding protein also transiently associates with immature PCSK6 and regulates its secretion. In Mus musculus (Mouse), this protein is Reticulocalbin-3.